Reading from the N-terminus, the 261-residue chain is Beta cell expansion factor A (261 aa).

The signal sequence occupies residues 1–21; sequence MNKRNWLLALSLSLAFSPCYA. Residues 99 to 261 are SYLF domain; that stretch reads KTAKEARIAI…IDKDLTETSR (163 aa).

The protein localises to the secreted. Its subcellular location is the host. Its function is as follows. Stimulates the proliferation of insulin-producing beta cells during development in gnotobiotic zebrafish and mice. BefA is a microbiome-derived protein that traffics from the host intestinal lumen to the pancreas to act directly on pancreatic islets. In pancreas, interacts directly with host beta cells and elicits their proliferation via a mechanism of increasing membrane permeabilization. Can also permeabilize bacterial cell membranes, but does not show killing of target bacteria. The chain is Beta cell expansion factor A from Aeromonas veronii.